We begin with the raw amino-acid sequence, 282 residues long: S-formylglutathione hydrolase (282 aa).

N-acetylalanine is present on alanine 2. N6-succinyllysine is present on lysine 4. Serine 149 acts as the Charge relay system in catalysis. Residue lysine 200 is modified to N6-acetyllysine. Catalysis depends on charge relay system residues aspartate 226 and histidine 260.

This sequence belongs to the esterase D family. As to quaternary structure, homodimer.

The protein resides in the cytoplasm. Its subcellular location is the cytoplasmic vesicle. The catalysed reaction is S-formylglutathione + H2O = formate + glutathione + H(+). Its function is as follows. Serine hydrolase involved in the detoxification of formaldehyde. In Mus musculus (Mouse), this protein is S-formylglutathione hydrolase (Esd).